We begin with the raw amino-acid sequence, 621 residues long: Type 2 DNA topoisomerase 6 subunit B (621 aa).

Residues asparagine 48, aspartate 80, 101–102 (SR), 111–118 (GQQGIGIS), and lysine 435 contribute to the ATP site.

The protein belongs to the TOP6B family. Homodimer. Heterotetramer of two Top6A and two Top6B chains.

The catalysed reaction is ATP-dependent breakage, passage and rejoining of double-stranded DNA.. Relaxes both positive and negative superturns and exhibits a strong decatenase activity. The polypeptide is Type 2 DNA topoisomerase 6 subunit B (Methanosarcina mazei (strain ATCC BAA-159 / DSM 3647 / Goe1 / Go1 / JCM 11833 / OCM 88) (Methanosarcina frisia)).